Reading from the N-terminus, the 490-residue chain is Cobyric acid synthase (490 aa).

The 194-residue stretch at 251–444 (GLTIAVIHLP…LHGIFANDAF (194 aa)) folds into the GATase cobBQ-type domain. Cys329 (nucleophile) is an active-site residue. The active site involves His436.

Belongs to the CobB/CobQ family. CobQ subfamily.

Its pathway is cofactor biosynthesis; adenosylcobalamin biosynthesis. Catalyzes amidations at positions B, D, E, and G on adenosylcobyrinic A,C-diamide. NH(2) groups are provided by glutamine, and one molecule of ATP is hydrogenolyzed for each amidation. The chain is Cobyric acid synthase from Roseiflexus castenholzii (strain DSM 13941 / HLO8).